We begin with the raw amino-acid sequence, 201 residues long: ATP-dependent Clp protease proteolytic subunit (201 aa).

S105 serves as the catalytic Nucleophile. Residue H130 is part of the active site.

It belongs to the peptidase S14 family. Fourteen ClpP subunits assemble into 2 heptameric rings which stack back to back to give a disk-like structure with a central cavity, resembling the structure of eukaryotic proteasomes.

The protein localises to the cytoplasm. It carries out the reaction Hydrolysis of proteins to small peptides in the presence of ATP and magnesium. alpha-casein is the usual test substrate. In the absence of ATP, only oligopeptides shorter than five residues are hydrolyzed (such as succinyl-Leu-Tyr-|-NHMec, and Leu-Tyr-Leu-|-Tyr-Trp, in which cleavage of the -Tyr-|-Leu- and -Tyr-|-Trp bonds also occurs).. Functionally, cleaves peptides in various proteins in a process that requires ATP hydrolysis. Has a chymotrypsin-like activity. Plays a major role in the degradation of misfolded proteins. The chain is ATP-dependent Clp protease proteolytic subunit from Acinetobacter baylyi (strain ATCC 33305 / BD413 / ADP1).